We begin with the raw amino-acid sequence, 243 residues long: Probable 6-phosphogluconolactonase (243 aa).

The protein belongs to the glucosamine/galactosamine-6-phosphate isomerase family. 6-phosphogluconolactonase subfamily.

It carries out the reaction 6-phospho-D-glucono-1,5-lactone + H2O = 6-phospho-D-gluconate + H(+). Its pathway is carbohydrate degradation; pentose phosphate pathway; D-ribulose 5-phosphate from D-glucose 6-phosphate (oxidative stage): step 2/3. Hydrolysis of 6-phosphogluconolactone to 6-phosphogluconate. The chain is Probable 6-phosphogluconolactonase from Drosophila melanogaster (Fruit fly).